The following is a 233-amino-acid chain: Ribonuclease HII (233 aa).

Residues 21-211 (KVIAGVDEVG…LDALPQWRHL (191 aa)) form the RNase H type-2 domain. A divalent metal cation contacts are provided by Asp27, Glu28, and Asp119.

The protein belongs to the RNase HII family. Requires Mn(2+) as cofactor. The cofactor is Mg(2+).

Its subcellular location is the cytoplasm. It carries out the reaction Endonucleolytic cleavage to 5'-phosphomonoester.. Endonuclease that specifically degrades the RNA of RNA-DNA hybrids. The chain is Ribonuclease HII from Streptomyces avermitilis (strain ATCC 31267 / DSM 46492 / JCM 5070 / NBRC 14893 / NCIMB 12804 / NRRL 8165 / MA-4680).